Here is a 162-residue protein sequence, read N- to C-terminus: UPF0178 protein RSKD131_2223 (162 aa).

Belongs to the UPF0178 family.

The sequence is that of UPF0178 protein RSKD131_2223 from Cereibacter sphaeroides (strain KD131 / KCTC 12085) (Rhodobacter sphaeroides).